A 105-amino-acid chain; its full sequence is Large ribosomal subunit protein uL24 (105 aa).

The protein belongs to the universal ribosomal protein uL24 family. In terms of assembly, part of the 50S ribosomal subunit.

Functionally, one of two assembly initiator proteins, it binds directly to the 5'-end of the 23S rRNA, where it nucleates assembly of the 50S subunit. In terms of biological role, one of the proteins that surrounds the polypeptide exit tunnel on the outside of the subunit. This Vibrio atlanticus (strain LGP32) (Vibrio splendidus (strain Mel32)) protein is Large ribosomal subunit protein uL24.